We begin with the raw amino-acid sequence, 384 residues long: Chaperone protein DnaJ (384 aa).

In terms of domain architecture, J spans 5-70; the sequence is DYYEILGVTR…QKKRIYDTYG (66 aa). The segment at 134–212 adopts a CR-type zinc-finger fold; it reads GTEKEIRLQT…CNGQGRTRQS (79 aa). 8 residues coordinate Zn(2+): C147, C150, C164, C167, C186, C189, C200, and C203. 4 CXXCXGXG motif repeats span residues 147 to 154, 164 to 171, 186 to 193, and 200 to 207; these read CEECNGSG, CPVCQGSG, CTRCQGMG, and CKTCNGQG. The tract at residues 352–384 is disordered; sequence KEKSGEKVRKWPWSKRKDREKKSMAESTREART.

Belongs to the DnaJ family. In terms of assembly, homodimer. Zn(2+) is required as a cofactor.

The protein resides in the cytoplasm. Participates actively in the response to hyperosmotic and heat shock by preventing the aggregation of stress-denatured proteins and by disaggregating proteins, also in an autonomous, DnaK-independent fashion. Unfolded proteins bind initially to DnaJ; upon interaction with the DnaJ-bound protein, DnaK hydrolyzes its bound ATP, resulting in the formation of a stable complex. GrpE releases ADP from DnaK; ATP binding to DnaK triggers the release of the substrate protein, thus completing the reaction cycle. Several rounds of ATP-dependent interactions between DnaJ, DnaK and GrpE are required for fully efficient folding. Also involved, together with DnaK and GrpE, in the DNA replication of plasmids through activation of initiation proteins. The sequence is that of Chaperone protein DnaJ from Syntrophobacter fumaroxidans (strain DSM 10017 / MPOB).